The sequence spans 124 residues: Small ribosomal subunit protein uS13 (124 aa).

The interval 98–124 (VRGQRTRCNARTRKGPRKTVGAKRKEK) is disordered.

Belongs to the universal ribosomal protein uS13 family. Part of the 30S ribosomal subunit. Forms a loose heterodimer with protein S19. Forms two bridges to the 50S subunit in the 70S ribosome.

Functionally, located at the top of the head of the 30S subunit, it contacts several helices of the 16S rRNA. In the 70S ribosome it contacts the 23S rRNA (bridge B1a) and protein L5 of the 50S subunit (bridge B1b), connecting the 2 subunits; these bridges are implicated in subunit movement. Contacts the tRNAs in the A and P-sites. The chain is Small ribosomal subunit protein uS13 from Dictyoglomus thermophilum (strain ATCC 35947 / DSM 3960 / H-6-12).